Consider the following 354-residue polypeptide: 3-dehydroquinate synthase (354 aa).

NAD(+) is bound by residues 66–71 (SGETSK), 100–104 (GATGD), 124–125 (TT), Lys136, Lys145, and 163–166 (FLET). Zn(2+) contacts are provided by Glu178, His242, and His256.

The protein belongs to the sugar phosphate cyclases superfamily. Dehydroquinate synthase family. NAD(+) serves as cofactor. Requires Co(2+) as cofactor. It depends on Zn(2+) as a cofactor.

The protein localises to the cytoplasm. The enzyme catalyses 7-phospho-2-dehydro-3-deoxy-D-arabino-heptonate = 3-dehydroquinate + phosphate. The protein operates within metabolic intermediate biosynthesis; chorismate biosynthesis; chorismate from D-erythrose 4-phosphate and phosphoenolpyruvate: step 2/7. In terms of biological role, catalyzes the conversion of 3-deoxy-D-arabino-heptulosonate 7-phosphate (DAHP) to dehydroquinate (DHQ). The protein is 3-dehydroquinate synthase of Staphylococcus epidermidis (strain ATCC 35984 / DSM 28319 / BCRC 17069 / CCUG 31568 / BM 3577 / RP62A).